We begin with the raw amino-acid sequence, 208 residues long: 2,3-bisphosphoglycerate-dependent phosphoglycerate mutase (208 aa).

Substrate contacts are provided by residues 9 to 16 (RHGQSEWN), 22 to 23 (TG), Arg-61, 88 to 91 (ERDY), Lys-99, 115 to 116 (RR), and 159 to 160 (GN). Residue His-10 is the Tele-phosphohistidine intermediate of the active site. Glu-88 functions as the Proton donor/acceptor in the catalytic mechanism.

Belongs to the phosphoglycerate mutase family. BPG-dependent PGAM subfamily. As to quaternary structure, homodimer.

It carries out the reaction (2R)-2-phosphoglycerate = (2R)-3-phosphoglycerate. Its pathway is carbohydrate degradation; glycolysis; pyruvate from D-glyceraldehyde 3-phosphate: step 3/5. Catalyzes the interconversion of 2-phosphoglycerate and 3-phosphoglycerate. The polypeptide is 2,3-bisphosphoglycerate-dependent phosphoglycerate mutase (Methylobacterium sp. (strain 4-46)).